Here is a 557-residue protein sequence, read N- to C-terminus: Leucine-rich glioma-inactivated protein 1 (557 aa).

Residues 1–34 (MESESSRRMGNACIPLKRIAYFLCLFSVVLLTEG) form the signal peptide. The region spanning 35-72 (KKPAKPKCPAVCTCSKDNALCENARSIPRTVPPDVISL) is the LRRNT domain. LRR repeat units lie at residues 92–113 (SLQLLLFTSNSFDVISDDAFIG), 116–137 (HLEYLFIENNNIKSISRHTFRG), and 140–161 (SLIHLSLANNNLQTLPKDIFKG). The LRRCT domain maps to 173-223 (NAFNCDCKLKWLVEWLGHTNATVEDIYCEGPPEYKKRKINSLSPKDFDCII). The N-linked (GlcNAc...) asparagine glycan is linked to asparagine 192. EAR repeat units lie at residues 225 to 267 (EFAK…EWDH), 271 to 313 (TFRN…KRDG), 317 to 364 (KFIK…KWNG), 366 to 415 (GFYS…QWSK), 419 to 462 (LFTN…KWGG), 464 to 506 (SFQD…NWDA), and 510 to 552 (KFVK…KHVI). Residue asparagine 277 is glycosylated (N-linked (GlcNAc...) asparagine). A glycan (N-linked (GlcNAc...) asparagine) is linked at asparagine 422.

Oligomer. Interacts with KCNA1 within a complex containing KCNA1, KCNA4 and KCNAB1. Part of a complex containing ADAM22, DLG4/PSD95 and CACNG2 (stargazin). Can bind to ADAM11 and ADAM23. Post-translationally, glycosylated. Expressed in the brain (at protein level). Expressed in cerebellar cortex basket cell terminals (at protein level). Highly expressed in the dentate gyrus and CA3 field of the hippocampus.

Its subcellular location is the secreted. The protein localises to the synapse. The protein resides in the cytoplasm. It localises to the golgi apparatus. It is found in the endoplasmic reticulum. Its function is as follows. Regulates voltage-gated potassium channels assembled from KCNA1, KCNA4 and KCNAB1. It slows down channel inactivation by precluding channel closure mediated by the KCNAB1 subunit. Ligand for ADAM22 that positively regulates synaptic transmission mediated by AMPA-type glutamate receptors. Plays a role in suppressing the production of MMP1/3 through the phosphatidylinositol 3-kinase/ERK pathway. This chain is Leucine-rich glioma-inactivated protein 1, found in Mus musculus (Mouse).